Reading from the N-terminus, the 640-residue chain is uncharacterized protein (640 aa).

Residues 594-614 (QCSSDHCKPGSSETLPEATNE) are disordered.

This is an uncharacterized protein from Rattus norvegicus (Rat).